The primary structure comprises 859 residues: Pre-mRNA-splicing factor SYF1 (859 aa).

HAT repeat units lie at residues 17–49 (NIRN…YWKE), 52–84 (RTDK…WEST), 88–108 (VETS…VRDC), 123–157 (YDLA…FVEE), 177–219 (DEAE…ERYL), 238–271 (RDNI…FELN), 427–459 (VYSE…LYWR), 461–482 (NAIS…PYIE), 520–554 (ILLE…YLEA), 599–633 (YEVM…VATS), 639–675 (LSPE…FEER), 685–718 (EILR…KAES), 720–754 (LGPS…FESS), and 756–790 (GETI…FELK).

Belongs to the crooked-neck family. In terms of assembly, belongs to the NTC complex (or PRP19-associated complex), composed of at least CEF1, CLF1, ISY1, NTC20, SNT309, SYF1, SYF2, and PRP19. The NTC complex associates with the spliceosome after the release of the U1 and U4 snRNAs and forms the CWC spliceosome subcomplex (or CEF1-associated complex) reminiscent of a late-stage spliceosome composed also of the U2, U5 and U6 snRNAs and at least BUD13, BUD31, BRR2, CDC40, CUS1, CWC2, CWC15, CWC21, CWC22, CWC23, CWC24, CWC25, CWC27, ECM2, HSH155, IST3, LEA1, MSL1, PRP8, PRP9, PRP11, PRP21, PRP22, PRP45, PRP46, SLU7, SMB1, SMD1, SMD2, SMD3, SMX2, SMX3, SNU114, SPP2, RSE1 and YJU2. Interacts with CEF1, CLF1, ISY1, NTC20, PRP22, PRP46 and SYF2.

The protein resides in the nucleus. Its function is as follows. Involved in pre-mRNA splicing and cell cycle control. As a component of the NTC complex (or PRP19-associated complex), associates to the spliceosome to mediate conformational rearrangement or to stabilize the structure of the spliceosome after U4 snRNA dissociation, which leads to spliceosome maturation. This is Pre-mRNA-splicing factor SYF1 (SYF1) from Saccharomyces cerevisiae (strain ATCC 204508 / S288c) (Baker's yeast).